Consider the following 435-residue polypeptide: uncharacterized protein (435 aa).

A run of 12 helical transmembrane segments spans residues 26–46 (LLSG…VAAP), 61–81 (IVFS…GSLL), 96–116 (IWSF…LYLF), 119–139 (LIGL…ALWF), 150–170 (LFDS…AFLV), 177–197 (VAFL…WQYY), 242–262 (VWGL…LLTW), 281–301 (FTAV…GWLV), 325–345 (FGFF…IICI), 347–367 (IGLA…AELA), 385–405 (LFGG…TGSF), and 407–427 (LSFL…VFVL).

It belongs to the major facilitator superfamily. Phthalate permease family.

It is found in the cell membrane. This is an uncharacterized protein from Bacillus subtilis (strain 168).